Consider the following 257-residue polypeptide: Ribonuclease HII (257 aa).

The region spanning 72-257 is the RNase H type-2 domain; sequence TYIAGIDEVG…FAPIKDMIQK (186 aa). The a divalent metal cation site is built by D78, E79, and D170.

Belongs to the RNase HII family. Mn(2+) serves as cofactor. Mg(2+) is required as a cofactor.

It is found in the cytoplasm. It catalyses the reaction Endonucleolytic cleavage to 5'-phosphomonoester.. Functionally, endonuclease that specifically degrades the RNA of RNA-DNA hybrids. This Bacillus cereus (strain AH820) protein is Ribonuclease HII.